The chain runs to 181 residues: Translation initiation factor IF-3, chloroplastic (181 aa).

Belongs to the IF-3 family. As to quaternary structure, monomer.

It is found in the plastid. Its subcellular location is the chloroplast. Its function is as follows. IF-3 binds to the 30S ribosomal subunit and shifts the equilibrium between 70S ribosomes and their 50S and 30S subunits in favor of the free subunits, thus enhancing the availability of 30S subunits on which protein synthesis initiation begins. This is Translation initiation factor IF-3, chloroplastic from Gracilaria tenuistipitata var. liui (Red alga).